The following is a 283-amino-acid chain: Thymidylate synthase (283 aa).

Residue Arg22 coordinates dUMP. Cys160 serves as the catalytic Nucleophile. DUMP-binding positions include 180 to 183, Asn191, and 221 to 223; these read RSCD and HIY. Asp183 provides a ligand contact to (6R)-5,10-methylene-5,6,7,8-tetrahydrofolate. Ser282 is a (6R)-5,10-methylene-5,6,7,8-tetrahydrofolate binding site.

Belongs to the thymidylate synthase family. Bacterial-type ThyA subfamily. As to quaternary structure, homodimer.

Its subcellular location is the cytoplasm. The enzyme catalyses dUMP + (6R)-5,10-methylene-5,6,7,8-tetrahydrofolate = 7,8-dihydrofolate + dTMP. Its pathway is pyrimidine metabolism; dTTP biosynthesis. Functionally, catalyzes the reductive methylation of 2'-deoxyuridine-5'-monophosphate (dUMP) to 2'-deoxythymidine-5'-monophosphate (dTMP) while utilizing 5,10-methylenetetrahydrofolate (mTHF) as the methyl donor and reductant in the reaction, yielding dihydrofolate (DHF) as a by-product. This enzymatic reaction provides an intracellular de novo source of dTMP, an essential precursor for DNA biosynthesis. In Haemophilus influenzae (strain 86-028NP), this protein is Thymidylate synthase.